We begin with the raw amino-acid sequence, 138 residues long: Basic phospholipase A2 homolog Vur-S49 (138 aa).

Residues 1 to 16 form the signal peptide; it reads MRALWIVAVCLIGVEG. 7 disulfide bridges follow: C42–C131, C44–C60, C59–C111, C65–C138, C66–C104, C73–C97, and C91–C102. The tract at residues 121-133 is important for membrane-damaging activities in eukaryotes and bacteria; heparin-binding; that stretch reads KKYKVYLRFKCKG.

This sequence belongs to the phospholipase A2 family. Group II subfamily. S49 sub-subfamily. Expressed by the venom gland.

It is found in the secreted. In terms of biological role, snake venom phospholipase A2 homolog that lacks enzymatic activity. Is able to suppress the acetylcholine (ACh)-evoked current mediated by alpha-7 (CHRNA7)-similar nAChRs in L.stagnalis neurons (IC(50)=2.18 uM). This activity is only partially reversible and seems to be non-competitive. The polypeptide is Basic phospholipase A2 homolog Vur-S49 (Vipera renardi (Steppe viper)).